A 200-amino-acid chain; its full sequence is Nucleoside triphosphate pyrophosphatase (200 aa).

Aspartate 79 functions as the Proton acceptor in the catalytic mechanism.

It belongs to the Maf family. The cofactor is a divalent metal cation.

The protein localises to the cytoplasm. It carries out the reaction a ribonucleoside 5'-triphosphate + H2O = a ribonucleoside 5'-phosphate + diphosphate + H(+). It catalyses the reaction a 2'-deoxyribonucleoside 5'-triphosphate + H2O = a 2'-deoxyribonucleoside 5'-phosphate + diphosphate + H(+). Nucleoside triphosphate pyrophosphatase. May have a dual role in cell division arrest and in preventing the incorporation of modified nucleotides into cellular nucleic acids. The sequence is that of Nucleoside triphosphate pyrophosphatase from Legionella pneumophila subsp. pneumophila (strain Philadelphia 1 / ATCC 33152 / DSM 7513).